Consider the following 346-residue polypeptide: Heat-inducible transcription repressor HrcA (346 aa).

The protein belongs to the HrcA family.

Its function is as follows. Negative regulator of class I heat shock genes (grpE-dnaK-dnaJ and groELS operons). Prevents heat-shock induction of these operons. In Erythrobacter litoralis (strain HTCC2594), this protein is Heat-inducible transcription repressor HrcA.